Reading from the N-terminus, the 444-residue chain is Tubulin beta chain (444 aa).

Positions 11, 69, 138, 142, 143, 144, 204, and 226 each coordinate GTP. Glu69 is a Mg(2+) binding site.

Belongs to the tubulin family. In terms of assembly, dimer of alpha and beta chains. A typical microtubule is a hollow water-filled tube with an outer diameter of 25 nm and an inner diameter of 15 nM. Alpha-beta heterodimers associate head-to-tail to form protofilaments running lengthwise along the microtubule wall with the beta-tubulin subunit facing the microtubule plus end conferring a structural polarity. Microtubules usually have 13 protofilaments but different protofilament numbers can be found in some organisms and specialized cells. Mg(2+) is required as a cofactor.

The protein resides in the cytoplasm. Its subcellular location is the cytoskeleton. Its function is as follows. Tubulin is the major constituent of microtubules, a cylinder consisting of laterally associated linear protofilaments composed of alpha- and beta-tubulin heterodimers. Microtubules grow by the addition of GTP-tubulin dimers to the microtubule end, where a stabilizing cap forms. Below the cap, tubulin dimers are in GDP-bound state, owing to GTPase activity of alpha-tubulin. In Onchocerca gibsoni, this protein is Tubulin beta chain (TBB).